The sequence spans 267 residues: Phosphatidylserine decarboxylase proenzyme (267 aa).

Residues Asp78, His132, and Ser236 each act as charge relay system; for autoendoproteolytic cleavage activity in the active site. Ser236 serves as the catalytic Schiff-base intermediate with substrate; via pyruvic acid; for decarboxylase activity. A Pyruvic acid (Ser); by autocatalysis modification is found at Ser236.

This sequence belongs to the phosphatidylserine decarboxylase family. PSD-B subfamily. Prokaryotic type I sub-subfamily. In terms of assembly, heterodimer of a large membrane-associated beta subunit and a small pyruvoyl-containing alpha subunit. Requires pyruvate as cofactor. In terms of processing, is synthesized initially as an inactive proenzyme. Formation of the active enzyme involves a self-maturation process in which the active site pyruvoyl group is generated from an internal serine residue via an autocatalytic post-translational modification. Two non-identical subunits are generated from the proenzyme in this reaction, and the pyruvate is formed at the N-terminus of the alpha chain, which is derived from the carboxyl end of the proenzyme. The autoendoproteolytic cleavage occurs by a canonical serine protease mechanism, in which the side chain hydroxyl group of the serine supplies its oxygen atom to form the C-terminus of the beta chain, while the remainder of the serine residue undergoes an oxidative deamination to produce ammonia and the pyruvoyl prosthetic group on the alpha chain. During this reaction, the Ser that is part of the protease active site of the proenzyme becomes the pyruvoyl prosthetic group, which constitutes an essential element of the active site of the mature decarboxylase.

The protein resides in the cell membrane. It catalyses the reaction a 1,2-diacyl-sn-glycero-3-phospho-L-serine + H(+) = a 1,2-diacyl-sn-glycero-3-phosphoethanolamine + CO2. It functions in the pathway phospholipid metabolism; phosphatidylethanolamine biosynthesis; phosphatidylethanolamine from CDP-diacylglycerol: step 2/2. Functionally, catalyzes the formation of phosphatidylethanolamine (PtdEtn) from phosphatidylserine (PtdSer). This chain is Phosphatidylserine decarboxylase proenzyme, found in Helicobacter pylori (strain J99 / ATCC 700824) (Campylobacter pylori J99).